The primary structure comprises 266 residues: Glutamate racemase (266 aa).

Substrate contacts are provided by residues Asp-9–Ser-10 and Tyr-41–Gly-42. Cys-72 acts as the Proton donor/acceptor in catalysis. Residue Asn-73–Thr-74 participates in substrate binding. Cys-184 serves as the catalytic Proton donor/acceptor. Residue Thr-185 to His-186 coordinates substrate.

It belongs to the aspartate/glutamate racemases family.

The enzyme catalyses L-glutamate = D-glutamate. The protein operates within cell wall biogenesis; peptidoglycan biosynthesis. In terms of biological role, provides the (R)-glutamate required for cell wall biosynthesis. The polypeptide is Glutamate racemase (Staphylococcus carnosus (strain TM300)).